The sequence spans 294 residues: Probable cobalamin biosynthesis protein CobD (294 aa).

A run of 4 helical transmembrane segments spans residues 52–72 (AGLL…IVPF), 73–93 (YAPF…SFAI), 145–165 (DSVV…AVIY), and 268–288 (IYWL…ATGV).

Belongs to the CobD/CbiB family.

It localises to the cell membrane. It functions in the pathway cofactor biosynthesis; adenosylcobalamin biosynthesis. Functionally, converts cobyric acid to cobinamide by the addition of aminopropanol on the F carboxylic group. The polypeptide is Probable cobalamin biosynthesis protein CobD (Thermococcus kodakarensis (strain ATCC BAA-918 / JCM 12380 / KOD1) (Pyrococcus kodakaraensis (strain KOD1))).